The chain runs to 277 residues: GATA transcription factor 15 (277 aa).

Residues 52 to 94 (AYDDHSTVTTSPSSPSSSSTGSVDCTLSLGTPSSRRAEPVAAA) form a disordered region. The segment covering 58–74 (TVTTSPSSPSSSSTGSV) has biased composition (low complexity). The GATA-type zinc finger occupies 154–179 (CANCGTASTPLWRNGPRGPKSLCNAC).

It belongs to the type IV zinc-finger family. Class B subfamily.

In terms of biological role, probable transcription factor that regulates organogenesis during transition from the vegetative to the reproductive phase. Regulates the expression of CYP78A11/PLA1, HD3A and MADS1 during reproductive development in rice. May act upstream of CYP78A11/PLA1 during panicle development. Acts independently of the photoperiodic and gibberellin signaling pathways. This chain is GATA transcription factor 15, found in Oryza sativa subsp. indica (Rice).